The sequence spans 248 residues: tRNA pseudouridine synthase A (248 aa).

D53 acts as the Nucleophile in catalysis. A substrate-binding site is contributed by Y111.

Belongs to the tRNA pseudouridine synthase TruA family. In terms of assembly, homodimer.

It carries out the reaction uridine(38/39/40) in tRNA = pseudouridine(38/39/40) in tRNA. Functionally, formation of pseudouridine at positions 38, 39 and 40 in the anticodon stem and loop of transfer RNAs. The chain is tRNA pseudouridine synthase A from Listeria monocytogenes serotype 4b (strain CLIP80459).